The sequence spans 461 residues: MLELRHRGGCPGPGGAGTPPPREGEAAGGDHETESTSDKETDIDDRYGDLDARGDSDVPEVPPSSDRTPEILKKALSGLSSRWKNWWIRGILTLTMISLFFLIIYMGSFMLMLLVLGIQVKCFQEIITIGYRVYHSYDLPWFRTLSWYFLLCVNYFFYGETVADYFATFVQREEQLQFLIRYHRFISFALYLAGFCMFVLSLVKKHYRLQFYMFAWTHVTLLITVTQSHLVIQNLFEGMIWFLVPISSVICNDITAYLFGFFFGRTPLIKLSPKKTWEGFIGGFFSTVIFGFIAAYVLSKYQYFVCPVEYRSDVNSFVTECEPSELFQLQNYSLPPFLQAVLSRETVSLYPFQIHSIALSTFASLIGPFGGFFASGFKRAFKIKDFANTIPGHGGIMDRFDCQYLMATFVHVYITSFIRGPNPSKVLQQLLVLQPEQQLNIYRTLKIHLTEKGILQPTWKV.

Residues 1 to 68 (MLELRHRGGC…PEVPPSSDRT (68 aa)) are disordered. Residue arginine 7 is modified to Omega-N-methylarginine. Basic and acidic residues predominate over residues 22–56 (REGEAAGGDHETESTSDKETDIDDRYGDLDARGDS). Phosphoserine occurs at positions 35 and 37. The next 6 membrane-spanning stretches (helical) occupy residues 96-116 (MISL…LLVL), 149-169 (FLLC…FATF), 183-203 (HRFI…LSLV), 230-250 (LVIQ…SSVI), 279-299 (GFIG…YVLS), and 357-377 (IALS…ASGF).

It belongs to the CDS family. In terms of assembly, homodimer. Interacts with FOS; this interaction may enhance catalytic activity. It depends on Mg(2+) as a cofactor. As to expression, brain, retina and testis. Found in cerebellar Purkinje cells, pineal body, inner segment of photoreceptor cells and postmitotic spermatocytes and spermatids.

The protein resides in the endoplasmic reticulum membrane. It catalyses the reaction a 1,2-diacyl-sn-glycero-3-phosphate + CTP + H(+) = a CDP-1,2-diacyl-sn-glycerol + diphosphate. It carries out the reaction 1-octadecanoyl-2-(5Z,8Z,11Z,14Z-eicosatetraenoyl)-sn-glycero-3-phosphate + CTP + H(+) = 1-octadecanoyl-2-(5Z,8Z,11Z,14Z-eicosatetraenoyl)-sn-glycero-3-cytidine-5'-diphosphate + diphosphate. The enzyme catalyses 1-octadecanoyl-2-(9Z,12Z-octadecadienoyl)-sn-glycero-3-phosphate + CTP + H(+) = 1-octadecanoyl-2-(9Z,12Z-octadecadienoyl)-sn-glycero-3-cytidine-5'-diphosphate + diphosphate. The catalysed reaction is 1-hexadecanoyl-2-(5Z,8Z,11Z,14Z-eicosatetraenoyl)-sn-glycero-3-phosphate + CTP + H(+) = 1-hexadecanoyl-2-(5Z,8Z,11Z,14Z-eicosatetraenoyl)-sn-glycero-3-cytidine-5'-diphosphate + diphosphate. It catalyses the reaction 1,2-di-(5Z,8Z,11Z,14Z)-eicosatetraenoyl-sn-glycero-3-phosphate + CTP + H(+) = 1,2-di-(5Z,8Z,11Z,14Z-eicosatetraenoyl)-sn-glycero-3-cytidine-5'-diphosphate + diphosphate. It carries out the reaction 1-octadecanoyl-2-(9Z-octadecenoyl)-sn-glycero-3-phosphate + CTP + H(+) = 1-octadecanoyl-2-(9Z-octadecenoyl)-sn-glycero-3-cytidine-5'-diphosphate + diphosphate. The enzyme catalyses 1-octadecanoyl-2-(4Z,7Z,10Z,13Z,16Z,19Z-docosahexaenoyl)-sn-glycero-3-phosphate + CTP + H(+) = 1-octadecanoyl-2-(4Z,7Z,10Z,13Z,16Z,19Z-docosahexaenoyl)-sn-glycero-3-cytidine-5'-diphosphate + diphosphate. The catalysed reaction is 1,2-di-(9Z,12Z-octadecadienoyl)-sn-glycero-3-phosphate + CTP + H(+) = 1,2-di-(9Z,12Z-octadecadienoyl)-sn-glycero-3-cytidine-5'-diphosphate + diphosphate. It catalyses the reaction 1,2-di-(9Z-octadecenoyl)-sn-glycero-3-phosphate + CTP + H(+) = 1,2-di-(9Z-octadecenoyl)-sn-glycero-3-cytidine-5'-diphosphate + diphosphate. Its pathway is phospholipid metabolism; CDP-diacylglycerol biosynthesis; CDP-diacylglycerol from sn-glycerol 3-phosphate: step 3/3. With respect to regulation, activated by GTP. Inhibited by CDP-diacylglycerol and by phosphatidylglycerol 4,5-bisphosphate (PPI2). Functionally, catalyzes the conversion of phosphatidic acid (PA) to CDP-diacylglycerol (CDP-DAG), an essential intermediate in the synthesis of phosphatidylglycerol, cardiolipin and phosphatidylinositol. Exhibits almost no acyl chain preference for PA, showing no discrimination for the sn-1/sn-2 acyl chain composition of PAs. Plays an important role in regulatinng the growth of lipid droplets which are storage organelles at the center of lipid and energy homeostasis. Positively regulates the differentiation and development of adipocytes. This Rattus norvegicus (Rat) protein is Phosphatidate cytidylyltransferase 1.